Here is a 180-residue protein sequence, read N- to C-terminus: Oligoribonuclease (180 aa).

In terms of domain architecture, Exonuclease spans 7-170 (LIWIDLEMTG…DDIRESIAEL (164 aa)). Tyr128 is an active-site residue.

This sequence belongs to the oligoribonuclease family.

The protein resides in the cytoplasm. 3'-to-5' exoribonuclease specific for small oligoribonucleotides. In Pseudomonas aeruginosa (strain UCBPP-PA14), this protein is Oligoribonuclease.